The chain runs to 264 residues: Thymidylate synthase (264 aa).

R21 is a dUMP binding site. H51 lines the (6R)-5,10-methylene-5,6,7,8-tetrahydrofolate pocket. 126-127 (RR) provides a ligand contact to dUMP. C146 serves as the catalytic Nucleophile. DUMP is bound by residues 166 to 169 (RSAD), N177, and 207 to 209 (HIY). D169 contributes to the (6R)-5,10-methylene-5,6,7,8-tetrahydrofolate binding site. A (6R)-5,10-methylene-5,6,7,8-tetrahydrofolate-binding site is contributed by A263.

This sequence belongs to the thymidylate synthase family. Bacterial-type ThyA subfamily. Homodimer.

The protein resides in the cytoplasm. It carries out the reaction dUMP + (6R)-5,10-methylene-5,6,7,8-tetrahydrofolate = 7,8-dihydrofolate + dTMP. Its pathway is pyrimidine metabolism; dTTP biosynthesis. Catalyzes the reductive methylation of 2'-deoxyuridine-5'-monophosphate (dUMP) to 2'-deoxythymidine-5'-monophosphate (dTMP) while utilizing 5,10-methylenetetrahydrofolate (mTHF) as the methyl donor and reductant in the reaction, yielding dihydrofolate (DHF) as a by-product. This enzymatic reaction provides an intracellular de novo source of dTMP, an essential precursor for DNA biosynthesis. This chain is Thymidylate synthase, found in Methylobacillus flagellatus (strain ATCC 51484 / DSM 6875 / VKM B-1610 / KT).